The sequence spans 533 residues: uncharacterized protein (533 aa).

Transmembrane regions (helical) follow at residues 4 to 23 (FLAA…GLAI), 28 to 47 (VFGL…VVST), 57 to 79 (IVYQ…PAFF), 86 to 108 (GWKL…WVLI), and 151 to 173 (VIGY…AVGA). The 85-residue stretch at 263–347 (LGEERETKIE…VAEVRRFLGD (85 aa)) folds into the RCK C-terminal domain. The next 4 membrane-spanning stretches (helical) occupy residues 352–374 (LADV…GAIP), 379–401 (GGTT…LGAL), 422–444 (LGLA…AALT), and 454–476 (GGLV…VLRL).

It belongs to the AAE transporter (TC 2.A.81) family.

The protein resides in the cell membrane. This is an uncharacterized protein from Corynebacterium glutamicum (strain ATCC 13032 / DSM 20300 / JCM 1318 / BCRC 11384 / CCUG 27702 / LMG 3730 / NBRC 12168 / NCIMB 10025 / NRRL B-2784 / 534).